We begin with the raw amino-acid sequence, 105 residues long: ATP synthase subunit c (105 aa).

The next 3 helical transmembrane spans lie at 3-23, 32-52, and 78-98; these read FLAL…GGMG, SILG…IGMG, and VAMA…IIAI.

The protein belongs to the ATPase C chain family. In terms of assembly, F-type ATPases have 2 components, F(1) - the catalytic core - and F(0) - the membrane proton channel. F(1) has five subunits: alpha(3), beta(3), gamma(1), delta(1), epsilon(1). F(0) has three main subunits: a(1), b(2) and c(10-14). The alpha and beta chains form an alternating ring which encloses part of the gamma chain. F(1) is attached to F(0) by a central stalk formed by the gamma and epsilon chains, while a peripheral stalk is formed by the delta and b chains.

The protein resides in the cell inner membrane. Functionally, f(1)F(0) ATP synthase produces ATP from ADP in the presence of a proton or sodium gradient. F-type ATPases consist of two structural domains, F(1) containing the extramembraneous catalytic core and F(0) containing the membrane proton channel, linked together by a central stalk and a peripheral stalk. During catalysis, ATP synthesis in the catalytic domain of F(1) is coupled via a rotary mechanism of the central stalk subunits to proton translocation. Its function is as follows. Key component of the F(0) channel; it plays a direct role in translocation across the membrane. A homomeric c-ring of between 10-14 subunits forms the central stalk rotor element with the F(1) delta and epsilon subunits. This is ATP synthase subunit c from Helicobacter pylori (strain P12).